The primary structure comprises 328 residues: Hairy/enhancer-of-split related with YRPW motif-like protein (328 aa).

The tract at residues 1-57 is disordered; the sequence is MKRPKEPSGSDGESDGPIDVGQEGQLSQMARPLSTPSSSQMQARKKHRGIIEKRRRD. Over residues 24 to 42 the composition is skewed to polar residues; sequence GQLSQMARPLSTPSSSQMQ. The segment at 42-111 is transcriptional repression and interaction with NCOR1 and SIN3A; the sequence is QARKKHRGII…GGTGFFDARA (70 aa). A bHLH domain is found at 43-98; the sequence is ARKKHRGIIEKRRRDRINSSLSELRRLVPTAFEKQGSSKLEKAEVLQMTVDHLKML. The region spanning 116–153 is the Orange domain; the sequence is FRSIGFRECLTEVIRYLGVLEGPSSRADPVRIRLLSHL. The tract at residues 239 to 308 is disordered; it reads SRGASSTRRA…NSSSPGPAGR (70 aa). Positions 261–270 are enriched in low complexity; sequence APSSRAARSS.

It belongs to the HEY family. In terms of assembly, self-associates. Interacts with GATA4, GATA6, HES1, HEY1 and HEY2. Interacts with HDAC1, NCOR1 and SIN3A.

It is found in the nucleus. In terms of biological role, downstream effector of Notch signaling which may be required for cardiovascular development. Transcriptional repressor which binds preferentially to the canonical E box sequence 5'-CACGTG-3'. Represses transcription by the cardiac transcriptional activators GATA4 and GATA6. The sequence is that of Hairy/enhancer-of-split related with YRPW motif-like protein (HEYL) from Homo sapiens (Human).